The sequence spans 258 residues: Tryptophan synthase alpha chain (258 aa).

Active-site proton acceptor residues include E47 and D58.

The protein belongs to the TrpA family. Tetramer of two alpha and two beta chains.

It catalyses the reaction (1S,2R)-1-C-(indol-3-yl)glycerol 3-phosphate + L-serine = D-glyceraldehyde 3-phosphate + L-tryptophan + H2O. It participates in amino-acid biosynthesis; L-tryptophan biosynthesis; L-tryptophan from chorismate: step 5/5. The alpha subunit is responsible for the aldol cleavage of indoleglycerol phosphate to indole and glyceraldehyde 3-phosphate. This chain is Tryptophan synthase alpha chain, found in Bacillus cereus (strain ATCC 10987 / NRS 248).